The following is a 1158-amino-acid chain: Adipocyte enhancer-binding protein 1 (1158 aa).

Residues 1 to 25 form the signal peptide; it reads MAAVRGAPLLSCLLALLALCPGGRP. Residues 41-387 are disordered; the sequence is FLSELEPEPR…TPTEKVKCPP (347 aa). Positions 45–55 are enriched in acidic residues; the sequence is LEPEPREDDVE. The span at 100–110 shows a compositional bias: basic and acidic residues; that stretch reads DKGPKVPKESL. Over residues 116-166 the composition is skewed to basic residues; it reads PPKKGKEKPPKATKKPKEKPPKATKKPKEKPPKATKKPKEKPPKATKKPPS. Positions 182–192 are enriched in pro residues; the sequence is PLPPPPSPGPE. Positions 193–202 are enriched in low complexity; the sequence is ELPQEGGAPL. Positions 211 to 223 are enriched in basic and acidic residues; it reads EETHVEAREHQPE. Over residues 252-266 the composition is skewed to basic residues; that stretch reads RQKQPRPPPSRRRRP. The span at 267 to 289 shows a compositional bias: basic and acidic residues; the sequence is ERVWPEPPEEKAPAPAPEERIEP. Residues 290-300 show a composition bias toward pro residues; that stretch reads PVKPLLPPLPP. The span at 326 to 371 shows a compositional bias: basic and acidic residues; that stretch reads PDAERQTDEEKEELKKPKKEDSSPKEETDKWAVEKGKDHKEPRKGE. An F5/8 type C domain is found at 383–540; it reads VKCPPIGMES…LCMRLEVLGC (158 aa). The interval 390–555 is required for DNA-binding and interaction with NFKBIA; sequence MESHRIEDNQ…YSYYAQNEVV (166 aa). Positions 421–624 are interaction with MAPK1 and MAPK3; sequence TGATEDDYYD…EPEFRYTAGI (204 aa). N-linked (GlcNAc...) asparagine glycosylation is present at Asn528. Residues 555 to 985 form an interaction with PTEN region; the sequence is VATDDLDFRH…TQCNFILARS (431 aa). The Peptidase M14 domain maps to 563–904; that stretch reads RHHSYKDMRQ…EALLTFMEQV (342 aa). The N-linked (GlcNAc...) asparagine glycan is linked to Asn922. A required for transcriptional repression region spans residues 941-1158; the sequence is DYWRILNPGE…ETYTVNFGDF (218 aa). The interval 1006–1158 is interaction with MAPK1 and MAPK3; it reads DPSRPMTPQQ…ETYTVNFGDF (153 aa). The segment covering 1108–1137 has biased composition (acidic residues); it reads EFETQLEPEFETQLEPEFEEEEEEEKEEEI. The tract at residues 1108–1141 is disordered; it reads EFETQLEPEFETQLEPEFEEEEEEEKEEEIATGQ.

The protein belongs to the peptidase M14 family. As to quaternary structure, isoform 1: Interacts with different types of collagen, including collagens I, III, and V. Isoform 2: Interacts with GNG5, NFKBIA, MAPK1, MAPK3 and PTEN. Interaction with MAPK1 may stimulate DNA-binding. May interact with calmodulin. Binds to DNA in vitro. Post-translationally, phosphorylated by MAPK1 in vitro. Expressed in osteoblast and visceral fat.

It is found in the secreted. It localises to the cytoplasm. The protein resides in the nucleus. Functionally, as a positive regulator of collagen fibrillogenesis, it is probably involved in the organization and remodeling of the extracellular matrix. In terms of biological role, may positively regulate MAP-kinase activity in adipocytes, leading to enhanced adipocyte proliferation and reduced adipocyte differentiation. May also positively regulate NF-kappa-B activity in macrophages by promoting the phosphorylation and subsequent degradation of I-kappa-B-alpha (NFKBIA), leading to enhanced macrophage inflammatory responsiveness. Can act as a transcriptional repressor. The sequence is that of Adipocyte enhancer-binding protein 1 (AEBP1) from Homo sapiens (Human).